The primary structure comprises 313 residues: NF-kappa-B inhibitor delta (313 aa).

ANK repeat units follow at residues 48 to 83, 84 to 113, 117 to 146, 152 to 201, 206 to 236, and 243 to 276; these read EGDT…IREH, KGKT…EPNA, QGRS…QVDL, EGLT…NHTS, SNKT…DLRT, and HGNT…DPTL.

The protein belongs to the NF-kappa-B inhibitor family. In terms of assembly, interacts with NFKB1, RELA and RELB; in the nucleus.

The protein localises to the nucleus. In terms of biological role, regulates the expression of IL-2, IL-6, and other cytokines through regulation on NF-kappa-B activity. Functions in the regulation of inflammatory responses. Involved in the induction of T helper 17 cells (Th17) differentiation upon recognition of antigen by T cell antigen receptor (TCR). May also regulate TCR-induced negative selection of thymocytes. This Homo sapiens (Human) protein is NF-kappa-B inhibitor delta (NFKBID).